The following is a 471-amino-acid chain: Plant intracellular Ras-group-related LRR protein 2 (471 aa).

Residues 106-133 are a coiled coil; sequence VVRLDEVHDSYEKKLKDTEEELSRVYST. LRR repeat units follow at residues 159–182, 183–205, 206–229, 231–251, 253–275, 276–298, 300–321, 324–346, 347–369, and 371–392; these read GGTV…FWKV, VGLV…ISKL, KKLE…GMLL, LRIL…IAHC, SLVE…GYGL, QNLE…ISEM, NLKY…IGRL, LEVL…ITDL, TNLR…FYRL, and KLEK…VATQ. A GVYW; degenerate motif is present at residues 393–405; the sequence is GAEVVREFMRKRW.

It belongs to the SHOC2 family. In terms of tissue distribution, widely expressed but preferentially in roots.

Its function is as follows. Leucine-rich repeat protein that likely mediates protein interactions, possibly in the context of signal transduction. The sequence is that of Plant intracellular Ras-group-related LRR protein 2 (PIRL2) from Arabidopsis thaliana (Mouse-ear cress).